The sequence spans 348 residues: Nicotinate-nucleotide--dimethylbenzimidazole phosphoribosyltransferase (348 aa).

The Proton acceptor role is filled by glutamate 316.

This sequence belongs to the CobT family.

The catalysed reaction is 5,6-dimethylbenzimidazole + nicotinate beta-D-ribonucleotide = alpha-ribazole 5'-phosphate + nicotinate + H(+). Its pathway is nucleoside biosynthesis; alpha-ribazole biosynthesis; alpha-ribazole from 5,6-dimethylbenzimidazole: step 1/2. Catalyzes the synthesis of alpha-ribazole-5'-phosphate from nicotinate mononucleotide (NAMN) and 5,6-dimethylbenzimidazole (DMB). The chain is Nicotinate-nucleotide--dimethylbenzimidazole phosphoribosyltransferase from Xanthomonas oryzae pv. oryzae (strain PXO99A).